Here is a 353-residue protein sequence, read N- to C-terminus: (S)-8-amino-7-oxononanoate synthase BioU (353 aa).

10–14 (GTGGI) serves as a coordination point for NAD(+). The Nucleophile role is filled by Lys147. Lys147 carries the allysine modification. 214–215 (GT) contributes to the NAD(+) binding site. The active-site Proton acceptor is Glu218. Residue His222 is the Proton donor and proton acceptor of the active site.

This sequence belongs to the BioU family. In terms of assembly, monomer.

The catalysed reaction is (8S)-8-amino-7-oxononanoate + L-lysyl-[protein] + CO2 = (S)-2-amino-6-oxohexanoyl-[protein] + (7R,8S)-8-amino-7-(carboxyamino)nonanoate + 2 H(+). It carries out the reaction (8S)-8-amino-7-oxononanoate + L-lysyl-[protein] + NADPH + H(+) = N(6)-[(2S,3R)-2-amino-8-carboxyoctan-3-yl]-L-lysyl-[protein] + NADP(+) + H2O. It catalyses the reaction N(6)-[(2S,3R)-2-amino-8-carboxyoctan-3-yl]-L-lysyl-[protein] + CO2 + NADP(+) + H2O = (S)-2-amino-6-oxohexanoyl-[protein] + (7R,8S)-8-amino-7-(carboxyamino)nonanoate + NADPH + 3 H(+). The enzyme catalyses (8S)-8-amino-7-oxononanoate + L-lysyl-[protein] + NADH + H(+) = N(6)-[(2S,3R)-2-amino-8-carboxyoctan-3-yl]-L-lysyl-[protein] + NAD(+) + H2O. The catalysed reaction is N(6)-[(2S,3R)-2-amino-8-carboxyoctan-3-yl]-L-lysyl-[protein] + CO2 + NAD(+) + H2O = (S)-2-amino-6-oxohexanoyl-[protein] + (7R,8S)-8-amino-7-(carboxyamino)nonanoate + NADH + 3 H(+). It participates in cofactor biosynthesis; biotin biosynthesis. In terms of biological role, a 'suicide' enzyme that participates in biotin synthesis. Catalyzes the formation of (S)-8-amino-7-oxononanoate (DAN-carbamic acid) from (7R,8S)-8-amino-7-(carboxyamino)nonanoate (DAN), a function equivalent to the cannonical BioA reaction and the first half-reaction of BioD. The cellular requirement for biotin is thought be low enough that this single turnover enzyme supplies a sufficient amount of the cofactor. Overall it catalyzes three reactions: formation of a covalent linkage with 8-amino-7-oxononanoate to yield a BioU-DAN conjugate at the epsilon-amino group of Lys124 of BioU using NAD(P)H, carboxylation of the conjugate to form BioU-DAN-carbamic acid, and release of DAN-carbamic acid using NAD(P)+. Complements a bioA deletion in E.coli. The chain is (S)-8-amino-7-oxononanoate synthase BioU from Haloferax mediterranei (strain ATCC 33500 / DSM 1411 / JCM 8866 / NBRC 14739 / NCIMB 2177 / R-4) (Halobacterium mediterranei).